The primary structure comprises 239 residues: Probable transcriptional regulatory protein Tcr_1104 (239 aa).

The protein belongs to the TACO1 family.

The protein resides in the cytoplasm. This is Probable transcriptional regulatory protein Tcr_1104 from Hydrogenovibrio crunogenus (strain DSM 25203 / XCL-2) (Thiomicrospira crunogena).